The sequence spans 364 residues: Chorismate synthase (364 aa).

Residue Arg47 participates in NADP(+) binding. FMN is bound by residues 125 to 127 (RAS), Gly288, 303 to 307 (KPTAT), and Arg329.

Belongs to the chorismate synthase family. As to quaternary structure, homotetramer. FMNH2 serves as cofactor.

It catalyses the reaction 5-O-(1-carboxyvinyl)-3-phosphoshikimate = chorismate + phosphate. It functions in the pathway metabolic intermediate biosynthesis; chorismate biosynthesis; chorismate from D-erythrose 4-phosphate and phosphoenolpyruvate: step 7/7. In terms of biological role, catalyzes the anti-1,4-elimination of the C-3 phosphate and the C-6 proR hydrogen from 5-enolpyruvylshikimate-3-phosphate (EPSP) to yield chorismate, which is the branch point compound that serves as the starting substrate for the three terminal pathways of aromatic amino acid biosynthesis. This reaction introduces a second double bond into the aromatic ring system. The polypeptide is Chorismate synthase (Synechococcus sp. (strain CC9605)).